The sequence spans 122 residues: Large ribosomal subunit protein uL14 (122 aa).

This sequence belongs to the universal ribosomal protein uL14 family. As to quaternary structure, part of the 50S ribosomal subunit. Forms a cluster with proteins L3 and L19. In the 70S ribosome, L14 and L19 interact and together make contacts with the 16S rRNA in bridges B5 and B8.

Functionally, binds to 23S rRNA. Forms part of two intersubunit bridges in the 70S ribosome. This is Large ribosomal subunit protein uL14 from Xylella fastidiosa (strain 9a5c).